Consider the following 397-residue polypeptide: Tyrosine--tRNA ligase (397 aa).

Positions 39–48 (PTAPDLHLGH) match the 'HIGH' region motif. The short motif at 223 to 227 (KMSKS) is the 'KMSKS' region element. Position 226 (Lys-226) interacts with ATP. The S4 RNA-binding domain occupies 334 to 395 (YPIANLVHDL…GKRKFAKIRL (62 aa)).

It belongs to the class-I aminoacyl-tRNA synthetase family. TyrS type 2 subfamily. Homodimer.

The protein resides in the cytoplasm. It carries out the reaction tRNA(Tyr) + L-tyrosine + ATP = L-tyrosyl-tRNA(Tyr) + AMP + diphosphate + H(+). Catalyzes the attachment of tyrosine to tRNA(Tyr) in a two-step reaction: tyrosine is first activated by ATP to form Tyr-AMP and then transferred to the acceptor end of tRNA(Tyr). This chain is Tyrosine--tRNA ligase, found in Methylococcus capsulatus (strain ATCC 33009 / NCIMB 11132 / Bath).